We begin with the raw amino-acid sequence, 124 residues long: Small ribosomal subunit protein uS12 (124 aa).

Asp89 is modified (3-methylthioaspartic acid).

Belongs to the universal ribosomal protein uS12 family. As to quaternary structure, part of the 30S ribosomal subunit. Contacts proteins S8 and S17. May interact with IF1 in the 30S initiation complex.

In terms of biological role, with S4 and S5 plays an important role in translational accuracy. Interacts with and stabilizes bases of the 16S rRNA that are involved in tRNA selection in the A site and with the mRNA backbone. Located at the interface of the 30S and 50S subunits, it traverses the body of the 30S subunit contacting proteins on the other side and probably holding the rRNA structure together. The combined cluster of proteins S8, S12 and S17 appears to hold together the shoulder and platform of the 30S subunit. In Buchnera aphidicola subsp. Cinara cedri (strain Cc), this protein is Small ribosomal subunit protein uS12.